The sequence spans 160 residues: Transcription elongation factor GreA (160 aa).

Residues Val-14–Ser-76 are a coiled coil.

It belongs to the GreA/GreB family.

Necessary for efficient RNA polymerase transcription elongation past template-encoded arresting sites. The arresting sites in DNA have the property of trapping a certain fraction of elongating RNA polymerases that pass through, resulting in locked ternary complexes. Cleavage of the nascent transcript by cleavage factors such as GreA or GreB allows the resumption of elongation from the new 3'terminus. GreA releases sequences of 2 to 3 nucleotides. The chain is Transcription elongation factor GreA from Clostridium botulinum (strain Okra / Type B1).